The sequence spans 337 residues: tRNA N6-adenosine threonylcarbamoyltransferase (337 aa).

Fe cation-binding residues include H111 and H115. Substrate-binding positions include 134–138, D167, G180, and N272; that span reads LVSGG. D300 provides a ligand contact to Fe cation.

The protein belongs to the KAE1 / TsaD family. Fe(2+) serves as cofactor.

The protein resides in the cytoplasm. It carries out the reaction L-threonylcarbamoyladenylate + adenosine(37) in tRNA = N(6)-L-threonylcarbamoyladenosine(37) in tRNA + AMP + H(+). In terms of biological role, required for the formation of a threonylcarbamoyl group on adenosine at position 37 (t(6)A37) in tRNAs that read codons beginning with adenine. Is involved in the transfer of the threonylcarbamoyl moiety of threonylcarbamoyl-AMP (TC-AMP) to the N6 group of A37, together with TsaE and TsaB. TsaD likely plays a direct catalytic role in this reaction. This is tRNA N6-adenosine threonylcarbamoyltransferase from Cronobacter sakazakii (strain ATCC BAA-894) (Enterobacter sakazakii).